Here is a 112-residue protein sequence, read N- to C-terminus: 2Fe-2S ferredoxin (112 aa).

One can recognise a 2Fe-2S ferredoxin-type domain in the interval 1–104 (MPQIVILPHA…DLVVEIPKYT (104 aa)). The [2Fe-2S] cluster site is built by Cys-42, Cys-48, Cys-51, and Cys-87.

It belongs to the adrenodoxin/putidaredoxin family. [2Fe-2S] cluster serves as cofactor.

Functionally, ferredoxin are iron-sulfur proteins that transfer electrons in a wide variety of metabolic reactions. In Pseudomonas aeruginosa (strain ATCC 15692 / DSM 22644 / CIP 104116 / JCM 14847 / LMG 12228 / 1C / PRS 101 / PAO1), this protein is 2Fe-2S ferredoxin (fdx).